Here is a 165-residue protein sequence, read N- to C-terminus: ATP synthase subunit delta, mitochondrial (165 aa).

Residues 1–27 (MNSLRIARAALRVRPTAVRAPLQRRGY) constitute a mitochondrion transit peptide.

Belongs to the ATPase epsilon chain family. F-type ATPases have 2 components, CF(1) - the catalytic core - and CF(0) - the membrane proton channel. CF(1) has five subunits: alpha(3), beta(3), gamma(1), delta(1), epsilon(1). CF(0) has three main subunits: a, b and c.

It is found in the mitochondrion. It localises to the mitochondrion inner membrane. Its function is as follows. Mitochondrial membrane ATP synthase (F(1)F(0) ATP synthase or Complex V) produces ATP from ADP in the presence of a proton gradient across the membrane which is generated by electron transport complexes of the respiratory chain. F-type ATPases consist of two structural domains, F(1) - containing the extramembraneous catalytic core, and F(0) - containing the membrane proton channel, linked together by a central stalk and a peripheral stalk. During catalysis, ATP turnover in the catalytic domain of F(1) is coupled via a rotary mechanism of the central stalk subunits to proton translocation. Part of the complex F(1) domain and of the central stalk which is part of the complex rotary element. Rotation of the central stalk against the surrounding alpha(3)beta(3) subunits leads to hydrolysis of ATP in three separate catalytic sites on the beta subunits. The sequence is that of ATP synthase subunit delta, mitochondrial (des) from Neurospora crassa (strain ATCC 24698 / 74-OR23-1A / CBS 708.71 / DSM 1257 / FGSC 987).